We begin with the raw amino-acid sequence, 324 residues long: 7,8-didemethyl-8-hydroxy-5-deazariboflavin synthase (324 aa).

The Radical SAM core domain maps to 4 to 239; it reads VTYSKNVFIP…QEVAIQIPPN (236 aa). Residues C18, C22, and C25 each coordinate [4Fe-4S] cluster.

The protein belongs to the radical SAM superfamily. CofG family. In terms of assembly, consists of two subunits, CofG and CofH. The cofactor is [4Fe-4S] cluster.

It catalyses the reaction 5-amino-5-(4-hydroxybenzyl)-6-(D-ribitylimino)-5,6-dihydrouracil + S-adenosyl-L-methionine = 7,8-didemethyl-8-hydroxy-5-deazariboflavin + 5'-deoxyadenosine + L-methionine + NH4(+) + H(+). It participates in cofactor biosynthesis; coenzyme F0 biosynthesis. Functionally, catalyzes the radical-mediated synthesis of 7,8-didemethyl-8-hydroxy-5-deazariboflavin from 5-amino-5-(4-hydroxybenzyl)-6-(D-ribitylimino)-5,6-dihydrouracil. This chain is 7,8-didemethyl-8-hydroxy-5-deazariboflavin synthase, found in Archaeoglobus fulgidus (strain ATCC 49558 / DSM 4304 / JCM 9628 / NBRC 100126 / VC-16).